The primary structure comprises 59 residues: U-myrmeciitoxin(01)-Mg5b (59 aa).

The first 21 residues, 1–21 (MRLSYLSLALAIIFVLTIMHA), serve as a signal peptide directing secretion. Residues 22-38 (SNVEAKASADPEPDAVG) constitute a propeptide that is removed on maturation.

As to expression, expressed by the venom gland.

Its subcellular location is the secreted. In terms of biological role, may have antimicrobial properties, like most ant linear peptides. In Myrmecia gulosa (Red bulldog ant), this protein is U-myrmeciitoxin(01)-Mg5b.